The primary structure comprises 511 residues: Pancreatic alpha-amylase (511 aa).

Residues 1 to 15 form the signal peptide; that stretch reads MKLFLLLSAFGFCWA. Residue Q16 is modified to Pyrrolidone carboxylic acid. 3 disulfides stabilise this stretch: C43–C101, C85–C130, and C156–C175. 3 residues coordinate Ca(2+): N115, R173, and D182. Residue R210 coordinates chloride. Catalysis depends on D212, which acts as the Nucleophile. H216 contributes to the Ca(2+) binding site. E248 functions as the Proton donor in the catalytic mechanism. Chloride contacts are provided by N313 and R352. An intrachain disulfide couples C393 to C399. N-linked (GlcNAc...) asparagine glycosylation occurs at N427. C465 and C477 are oxidised to a cystine.

It belongs to the glycosyl hydrolase 13 family. In terms of assembly, binds to the sea anemone inhibitor helianthamide and magnificamide. It depends on Ca(2+) as a cofactor. The cofactor is chloride.

It is found in the secreted. The protein resides in the extracellular space. It catalyses the reaction Endohydrolysis of (1-&gt;4)-alpha-D-glucosidic linkages in polysaccharides containing three or more (1-&gt;4)-alpha-linked D-glucose units.. The chain is Pancreatic alpha-amylase (AMY2) from Sus scrofa (Pig).